The chain runs to 376 residues: Chaperone protein DnaJ (376 aa).

The J domain occupies 4–70; sequence DYYQILGVSK…QKRAAYDRFG (67 aa). A CR-type zinc finger spans residues 139–217; it reads GVEKNISFSS…CHGLGRYHKQ (79 aa). Zn(2+) contacts are provided by C152, C155, C169, C172, C191, C194, C205, and C208. CXXCXGXG motif repeat units follow at residues 152–159, 169–176, 191–198, and 205–212; these read CDTCHGSG, CDACGGVG, CHKCQGNG, and CKKCHGLG.

Belongs to the DnaJ family. Homodimer. Zn(2+) serves as cofactor.

It is found in the cytoplasm. Participates actively in the response to hyperosmotic and heat shock by preventing the aggregation of stress-denatured proteins and by disaggregating proteins, also in an autonomous, DnaK-independent fashion. Unfolded proteins bind initially to DnaJ; upon interaction with the DnaJ-bound protein, DnaK hydrolyzes its bound ATP, resulting in the formation of a stable complex. GrpE releases ADP from DnaK; ATP binding to DnaK triggers the release of the substrate protein, thus completing the reaction cycle. Several rounds of ATP-dependent interactions between DnaJ, DnaK and GrpE are required for fully efficient folding. Also involved, together with DnaK and GrpE, in the DNA replication of plasmids through activation of initiation proteins. In Rickettsia bellii (strain RML369-C), this protein is Chaperone protein DnaJ.